The primary structure comprises 130 residues: MSMQDPIADMFTRVRNGQMASKVSVSMPSSKLRVAIAAVLKEEGYVSDFAVSGDVKPVLEVTLKYFEGKKVIESIERVSRPGLRIYKKKDELPKVLGGLGVAIVSTSKGVMTDRAARKAGMGGEIIGYVA.

This sequence belongs to the universal ribosomal protein uS8 family. In terms of assembly, part of the 30S ribosomal subunit. Contacts proteins S5 and S12.

One of the primary rRNA binding proteins, it binds directly to 16S rRNA central domain where it helps coordinate assembly of the platform of the 30S subunit. This is Small ribosomal subunit protein uS8 from Pseudoalteromonas atlantica (strain T6c / ATCC BAA-1087).